The sequence spans 727 residues: Procollagen-lysine,2-oxoglutarate 5-dioxygenase 1 (727 aa).

An N-terminal signal peptide occupies residues 1 to 18 (MRPLLLLALLGWLLLAEA). Asparagine 163, asparagine 197, and asparagine 538 each carry an N-linked (GlcNAc...) asparagine glycan. The Fe2OG dioxygenase domain occupies 636–727 (QFDLAFVVRY…RYIAVSFVDP (92 aa)). Histidine 656 and aspartate 658 together coordinate Fe cation. Asparagine 686 carries an N-linked (GlcNAc...) asparagine glycan. Histidine 708 contacts Fe cation. Arginine 718 is an active-site residue.

Homodimer. Identified in a complex with P3H3 and P3H4. It depends on Fe(2+) as a cofactor. L-ascorbate serves as cofactor.

Its subcellular location is the rough endoplasmic reticulum membrane. The catalysed reaction is L-lysyl-[collagen] + 2-oxoglutarate + O2 = (5R)-5-hydroxy-L-lysyl-[collagen] + succinate + CO2. Its function is as follows. Part of a complex composed of PLOD1, P3H3 and P3H4 that catalyzes hydroxylation of lysine residues in collagen alpha chains and is required for normal assembly and cross-linkling of collagen fibrils. Forms hydroxylysine residues in -Xaa-Lys-Gly- sequences in collagens. These hydroxylysines serve as sites of attachment for carbohydrate units and are essential for the stability of the intermolecular collagen cross-links. This chain is Procollagen-lysine,2-oxoglutarate 5-dioxygenase 1 (PLOD1), found in Homo sapiens (Human).